Reading from the N-terminus, the 380-residue chain is Flap endonuclease 1-A (380 aa).

Positions methionine 1–arginine 105 are N-domain. Aspartate 34 contributes to the Mg(2+) binding site. Residue arginine 71 participates in DNA binding. Positions 87, 159, 161, 180, and 182 each coordinate Mg(2+). The segment at alanine 123–histidine 254 is I-domain. DNA is bound at residue glutamate 159. The DNA site is built by glycine 232 and aspartate 234. Aspartate 234 contributes to the Mg(2+) binding site. The segment at serine 336–phenylalanine 344 is interaction with PCNA. The interval serine 351–lysine 380 is disordered. Over residues lysine 355 to serine 364 the composition is skewed to basic and acidic residues. Positions lysine 371–lysine 380 are enriched in basic residues.

It belongs to the XPG/RAD2 endonuclease family. FEN1 subfamily. As to quaternary structure, interacts with PCNA. Three molecules of FEN1 bind to one PCNA trimer with each molecule binding to one PCNA monomer. PCNA stimulates the nuclease activity without altering cleavage specificity. Mg(2+) serves as cofactor. Phosphorylated. Phosphorylation upon DNA damage induces relocalization to the nuclear plasma.

The protein resides in the nucleus. Its subcellular location is the nucleolus. It is found in the nucleoplasm. The protein localises to the mitochondrion. In terms of biological role, structure-specific nuclease with 5'-flap endonuclease and 5'-3' exonuclease activities involved in DNA replication and repair. During DNA replication, cleaves the 5'-overhanging flap structure that is generated by displacement synthesis when DNA polymerase encounters the 5'-end of a downstream Okazaki fragment. It enters the flap from the 5'-end and then tracks to cleave the flap base, leaving a nick for ligation. Also involved in the long patch base excision repair (LP-BER) pathway, by cleaving within the apurinic/apyrimidinic (AP) site-terminated flap. Acts as a genome stabilization factor that prevents flaps from equilibrating into structures that lead to duplications and deletions. Also possesses 5'-3' exonuclease activity on nicked or gapped double-stranded DNA, and exhibits RNase H activity. Also involved in replication and repair of rDNA and in repairing mitochondrial DNA. The protein is Flap endonuclease 1-A of Sorghum bicolor (Sorghum).